We begin with the raw amino-acid sequence, 248 residues long: 2,3-bisphosphoglycerate-dependent phosphoglycerate mutase (248 aa).

Substrate is bound by residues 8-15 (RHGESTWN), 21-22 (TG), arginine 60, 87-90 (ERHY), lysine 98, and 114-115 (RR). The Tele-phosphohistidine intermediate role is filled by histidine 9. Residue glutamate 87 is the Proton donor/acceptor of the active site. Positions 117 to 137 (YDTPPPALEPTDPRASYDDPR) are disordered. Positions 127–137 (TDPRASYDDPR) are enriched in basic and acidic residues. 183–184 (GN) contacts substrate.

Belongs to the phosphoglycerate mutase family. BPG-dependent PGAM subfamily. In terms of assembly, homodimer.

It catalyses the reaction (2R)-2-phosphoglycerate = (2R)-3-phosphoglycerate. It participates in carbohydrate degradation; glycolysis; pyruvate from D-glyceraldehyde 3-phosphate: step 3/5. Catalyzes the interconversion of 2-phosphoglycerate and 3-phosphoglycerate. The chain is 2,3-bisphosphoglycerate-dependent phosphoglycerate mutase from Cupriavidus taiwanensis (strain DSM 17343 / BCRC 17206 / CCUG 44338 / CIP 107171 / LMG 19424 / R1) (Ralstonia taiwanensis (strain LMG 19424)).